A 217-amino-acid polypeptide reads, in one-letter code: Probable transaldolase (217 aa).

The active-site Schiff-base intermediate with substrate is the K83.

The protein belongs to the transaldolase family. Type 3B subfamily.

Its subcellular location is the cytoplasm. It catalyses the reaction D-sedoheptulose 7-phosphate + D-glyceraldehyde 3-phosphate = D-erythrose 4-phosphate + beta-D-fructose 6-phosphate. It functions in the pathway carbohydrate degradation; pentose phosphate pathway; D-glyceraldehyde 3-phosphate and beta-D-fructose 6-phosphate from D-ribose 5-phosphate and D-xylulose 5-phosphate (non-oxidative stage): step 2/3. Functionally, transaldolase is important for the balance of metabolites in the pentose-phosphate pathway. The chain is Probable transaldolase from Clostridium botulinum (strain Loch Maree / Type A3).